The following is a 136-amino-acid chain: Small ribosomal subunit protein uS9 (136 aa).

It belongs to the universal ribosomal protein uS9 family.

In Borrelia hermsii (strain HS1 / DAH), this protein is Small ribosomal subunit protein uS9.